The following is a 278-amino-acid chain: MASQIDQYAVFGNPINHSKSPFIHTLFARQTQQSMIYTAQCVPVDGFTEAAKHFFAQGGRGCNVTVPFKEEAYRFADRLTERARLAGAVNTLKKLDDGEILGDNTDGEGLVQDLLAQQVLLKGATILLIGAGGAARGVLKPLLDQQPASITVTNRTFAKAEQLAELVAAYGEVKAQAFEQLKQSYDVIINSTSASLDGELPAIDPVIFSSRSVCYDMMYGKGYTVFNQWARQHGCAQAIDGLGMLVGQAAESFMLWRGLRPGTKQILRELRKNLEGAL.

Shikimate contacts are provided by residues S18–S20 and T65. The active-site Proton acceptor is K69. NADP(+) is bound at residue E81. Shikimate contacts are provided by N90 and D106. NADP(+) is bound by residues G130–A134 and N154–K159. Y223 provides a ligand contact to shikimate. Residue G241 coordinates NADP(+).

Belongs to the shikimate dehydrogenase family. In terms of assembly, homodimer.

The enzyme catalyses shikimate + NADP(+) = 3-dehydroshikimate + NADPH + H(+). It participates in metabolic intermediate biosynthesis; chorismate biosynthesis; chorismate from D-erythrose 4-phosphate and phosphoenolpyruvate: step 4/7. Involved in the biosynthesis of the chorismate, which leads to the biosynthesis of aromatic amino acids. Catalyzes the reversible NADPH linked reduction of 3-dehydroshikimate (DHSA) to yield shikimate (SA). This chain is Shikimate dehydrogenase (NADP(+)), found in Vibrio cholerae serotype O1 (strain ATCC 39541 / Classical Ogawa 395 / O395).